The chain runs to 530 residues: UDP-glucuronosyltransferase 2B15 (530 aa).

The first 23 residues, 1-23 (MSGKWISALLLLQISFCFKSGNC), serve as a signal peptide directing secretion. Asn-316 carries N-linked (GlcNAc...) asparagine glycosylation. Residues 494 to 510 (VIGFLLSCVAVTVVLAL) traverse the membrane as a helical segment.

It belongs to the UDP-glycosyltransferase family. Post-translationally, N-glycosylated. Liver. Lower levels seen in the kidney and testis.

It localises to the endoplasmic reticulum membrane. The catalysed reaction is glucuronate acceptor + UDP-alpha-D-glucuronate = acceptor beta-D-glucuronoside + UDP + H(+). It carries out the reaction 17alpha-estradiol + UDP-alpha-D-glucuronate = 17alpha-estradiol 3-O-(beta-D-glucuronate) + UDP + H(+). The enzyme catalyses 16alpha,17alpha-estriol + UDP-alpha-D-glucuronate = 16alpha,17alpha-estriol 3-O-(beta-D-glucuronate) + UDP + H(+). It catalyses the reaction 17beta-hydroxy-5alpha-androstan-3-one + UDP-alpha-D-glucuronate = 5alpha-dihydrotestosterone 17-O-(beta-D-glucuronate) + UDP + H(+). Functionally, UDP-glucuronosyltransferase (UGT) that catalyzes phase II biotransformation reactions in which lipophilic substrates are conjugated with glucuronic acid to increase the metabolite's water solubility, thereby facilitating excretion into either the urine or bile. Essential for the elimination and detoxification of drugs, xenobiotics and endogenous compounds. Catalyzes the glucuronidation of endogenous steroid hormones such as androgens (testosterone, androsterone) and estrogens (estradiol, epiestradiol, estriol, catechol estrogens). Displays glucuronidation activity toward several classes of xenoblotic substrates, including phenolic compounds (eugenol, 4-nitrophenol, 4-hydroxybiphenyl) and phenylpropanoids (naringenin, coumarins). Catalyzes the glucuronidation of monoterpenoid alcohols such as borneol, menthol and isomenthol, a class of natural compounds used in essential oils. The protein is UDP-glucuronosyltransferase 2B15 of Rattus norvegicus (Rat).